Here is a 503-residue protein sequence, read N- to C-terminus: von Willebrand factor A domain-containing protein 1 (503 aa).

The N-terminal stretch at 1–21 (MEVRKALTCVFLTVFLCSGDA) is a signal peptide. The region spanning 36 to 213 (DVLFLLDSSG…IIGEDLRNSI (178 aa)) is the VWFA domain. Fibronectin type-III domains follow at residues 218–324 (RAER…TVNP) and 331–423 (LLSS…VLPA).

Homodimer or homomultimer; disulfide-linked.

The protein localises to the secreted. It is found in the extracellular space. The protein resides in the extracellular matrix. Its subcellular location is the basement membrane. Functionally, promotes matrix assembly. Involved in the organization of skeletal muscles and in the formation of neuromuscular junctions. The polypeptide is von Willebrand factor A domain-containing protein 1 (Danio rerio (Zebrafish)).